The following is a 416-amino-acid chain: Signal recognition particle receptor FtsY (416 aa).

Positions 1–10 (MFSFFRRKKK) are enriched in basic residues. The disordered stretch occupies residues 1–24 (MFSFFRRKKKQETPALEEAQVQET). Residues 224 to 231 (GINGAGKT), 304 to 308 (DTAGR), and 368 to 371 (TKLD) each bind GTP.

The protein belongs to the GTP-binding SRP family. FtsY subfamily. Part of the signal recognition particle protein translocation system, which is composed of SRP and FtsY. SRP is a ribonucleoprotein composed of Ffh and a 4.5S RNA molecule. Requires Mg(2+) as cofactor.

The protein resides in the cell membrane. Its subcellular location is the cytoplasm. The catalysed reaction is GTP + H2O = GDP + phosphate + H(+). Involved in targeting and insertion of nascent membrane proteins into the cytoplasmic membrane. Acts as a receptor for the complex formed by the signal recognition particle (SRP) and the ribosome-nascent chain (RNC). Interaction with SRP-RNC leads to the transfer of the RNC complex to the Sec translocase for insertion into the membrane, the hydrolysis of GTP by both Ffh and FtsY, and the dissociation of the SRP-FtsY complex into the individual components. This chain is Signal recognition particle receptor FtsY, found in Neisseria gonorrhoeae.